A 374-amino-acid polypeptide reads, in one-letter code: MNYREYQQIVRRKSRQISVGPVKVGGDAPITVQTMTNTPTDDVAATVAQIHRAERAGVDIVRVSCPDEAATAALADIVRQVNVPIVADIHFHYRRAIEAAKAGAACLRINPGNIGSAERVREVVAAARDHGCSIRIGVNAGSLEKHLLEKYGEPNPDALVESALEHAKILQDHDFHEFKISVKASDVFMAVAAYQQLAEVCDHPLHIGITEAGGRRTGTVKSSIGLGSLLWAGIGDTMRVSLSAEPEEEVAVGWDILKSLGIRHRGVRVISCPSCARQGFNVIDTVAQLEDRLAHIEEPITLSIIGCVVNGPGEALMTDLGVTGGGNGRHMVYAAGKTDHTIEGAAMIDHVVELVEQRAARLREEKAAAKQAAE.

Cys272, Cys275, Cys307, and Glu314 together coordinate [4Fe-4S] cluster.

Belongs to the IspG family. Requires [4Fe-4S] cluster as cofactor.

The enzyme catalyses (2E)-4-hydroxy-3-methylbut-2-enyl diphosphate + oxidized [flavodoxin] + H2O + 2 H(+) = 2-C-methyl-D-erythritol 2,4-cyclic diphosphate + reduced [flavodoxin]. The protein operates within isoprenoid biosynthesis; isopentenyl diphosphate biosynthesis via DXP pathway; isopentenyl diphosphate from 1-deoxy-D-xylulose 5-phosphate: step 5/6. Functionally, converts 2C-methyl-D-erythritol 2,4-cyclodiphosphate (ME-2,4cPP) into 1-hydroxy-2-methyl-2-(E)-butenyl 4-diphosphate. The polypeptide is 4-hydroxy-3-methylbut-2-en-1-yl diphosphate synthase (flavodoxin) (Acidiphilium cryptum (strain JF-5)).